A 443-amino-acid chain; its full sequence is Histone deacetylase 10, chloroplastic (443 aa).

The transit peptide at 1-65 (MEQLWVPSLP…PSHNGTSISD (65 aa)) directs the protein to the chloroplast. Residues 82–412 (DAHILYCTSP…FRAFLGEPSL (331 aa)) form a histone deacetylase region. His-222 (proton donor/acceptor) is an active-site residue. The Zn(2+) site is built by Asp-259, His-261, and Asp-346.

This sequence belongs to the histone deacetylase family. It depends on Zn(2+) as a cofactor. Expressed in leaves. Expressed in coleoptiles, leaves, flag leaves and flowers. Expressed at low levels in roots.

The protein resides in the plastid. It localises to the chloroplast. Its subcellular location is the mitochondrion. It catalyses the reaction N-acetylserotonin + H2O = serotonin + acetate. The enzyme catalyses N-acetyltyramine + H2O = tyramine + acetate. The catalysed reaction is N-acetyltryptamine + H2O = tryptamine + acetate. It carries out the reaction melatonin + H2O = 5-methoxytryptamine + acetate. The activity of this enzyme is not inhibited by butyrate, a well-known histone deacetylase inhibitor. Its function is as follows. Involved in the regulation of melatonin biosynthesis by catalyzing the deacetylation of N-acetylserotonin to produce serotonin. N-acetylserotonin is methylated by acetylserotonin O-methyltransferase (ASMT) to produce melatonin (N-acetyl-5-methoxytryptamine). Deacetylates melatonin to produce 5-methoxytryptamine. In vitro, deacetylates N-acetyltyramine and N-acetyltryptamine to produce tyramine and tryptamine, respectively. This Oryza sativa subsp. japonica (Rice) protein is Histone deacetylase 10, chloroplastic.